Consider the following 274-residue polypeptide: Large ribosomal subunit protein uL2 (274 aa).

Disordered stretches follow at residues 21–59 (KVGL…GGHK) and 224–274 (AMNP…QLKG). The span at 32–42 (SLTSGKKSSGG) shows a compositional bias: low complexity. The segment covering 45-59 (NHGRITTRHRGGGHK) has biased composition (basic residues). Positions 263–274 (KSSDKYIKQLKG) are enriched in basic and acidic residues.

The protein belongs to the universal ribosomal protein uL2 family. In terms of assembly, part of the 50S ribosomal subunit. Forms a bridge to the 30S subunit in the 70S ribosome.

In terms of biological role, one of the primary rRNA binding proteins. Required for association of the 30S and 50S subunits to form the 70S ribosome, for tRNA binding and peptide bond formation. It has been suggested to have peptidyltransferase activity; this is somewhat controversial. Makes several contacts with the 16S rRNA in the 70S ribosome. The protein is Large ribosomal subunit protein uL2 of Wolbachia pipientis wMel.